A 100-amino-acid chain; its full sequence is MITKEEAQKIAKLARLKFEEDTVEKFFTQLSTIMDMIDILNEIDCKDIEPLTSVCNMNARMREDAVTSSDLSSELFDNVSGNSTQLAKEVKYFITPKVVE.

This sequence belongs to the GatC family. As to quaternary structure, heterotrimer of A, B and C subunits.

It catalyses the reaction L-glutamyl-tRNA(Gln) + L-glutamine + ATP + H2O = L-glutaminyl-tRNA(Gln) + L-glutamate + ADP + phosphate + H(+). It carries out the reaction L-aspartyl-tRNA(Asn) + L-glutamine + ATP + H2O = L-asparaginyl-tRNA(Asn) + L-glutamate + ADP + phosphate + 2 H(+). In terms of biological role, allows the formation of correctly charged Asn-tRNA(Asn) or Gln-tRNA(Gln) through the transamidation of misacylated Asp-tRNA(Asn) or Glu-tRNA(Gln) in organisms which lack either or both of asparaginyl-tRNA or glutaminyl-tRNA synthetases. The reaction takes place in the presence of glutamine and ATP through an activated phospho-Asp-tRNA(Asn) or phospho-Glu-tRNA(Gln). The protein is Aspartyl/glutamyl-tRNA(Asn/Gln) amidotransferase subunit C of Rickettsia africae (strain ESF-5).